A 285-amino-acid chain; its full sequence is Pantothenate synthetase (285 aa).

33 to 40 contacts ATP; sequence MGALHEGH. The active-site Proton donor is the His40. Gln64 contacts (R)-pantoate. Gln64 provides a ligand contact to beta-alanine. An ATP-binding site is contributed by 150 to 153; that stretch reads GEKD. Residue Gln156 coordinates (R)-pantoate. ATP is bound by residues Ala179 and 187 to 190; that span reads LSSR.

This sequence belongs to the pantothenate synthetase family. In terms of assembly, homodimer.

It localises to the cytoplasm. It carries out the reaction (R)-pantoate + beta-alanine + ATP = (R)-pantothenate + AMP + diphosphate + H(+). It participates in cofactor biosynthesis; (R)-pantothenate biosynthesis; (R)-pantothenate from (R)-pantoate and beta-alanine: step 1/1. Catalyzes the condensation of pantoate with beta-alanine in an ATP-dependent reaction via a pantoyl-adenylate intermediate. The chain is Pantothenate synthetase from Caulobacter vibrioides (strain ATCC 19089 / CIP 103742 / CB 15) (Caulobacter crescentus).